The primary structure comprises 197 residues: Large ribosomal subunit protein eL15 (197 aa).

Over residues G163–R172 the composition is skewed to basic residues. Positions G163–K197 are disordered. The span at P186–K197 shows a compositional bias: polar residues.

It belongs to the eukaryotic ribosomal protein eL15 family.

The chain is Large ribosomal subunit protein eL15 from Methanococcoides burtonii (strain DSM 6242 / NBRC 107633 / OCM 468 / ACE-M).